A 378-amino-acid chain; its full sequence is Probable mannosyltransferase MNT3 (378 aa).

At 1–4 the chain is on the cytoplasmic side; the sequence is MLWH. A helical; Signal-anchor for type II membrane protein membrane pass occupies residues 5–25; that stretch reads LVFILIAILLLTFSPKIESLF. Topologically, residues 26–378 are lumenal; the sequence is KSFTINKPTK…TNHFLNILHN (353 aa). Residues asparagine 73 and asparagine 149 are each glycosylated (N-linked (GlcNAc...) asparagine).

It belongs to the glycosyltransferase 15 family.

The protein localises to the membrane. Functionally, transfers an alpha-D-mannosyl residue from GDP-mannose into lipid-linked oligosaccharide, forming an alpha-(1-&gt;2)-D-mannosyl-D-mannose linkage. The chain is Probable mannosyltransferase MNT3 (MNT3) from Candida albicans (strain SC5314 / ATCC MYA-2876) (Yeast).